We begin with the raw amino-acid sequence, 139 residues long: ATP synthase epsilon chain (139 aa).

Belongs to the ATPase epsilon chain family. As to quaternary structure, F-type ATPases have 2 components, CF(1) - the catalytic core - and CF(0) - the membrane proton channel. CF(1) has five subunits: alpha(3), beta(3), gamma(1), delta(1), epsilon(1). CF(0) has three main subunits: a, b and c.

Its subcellular location is the cell inner membrane. Produces ATP from ADP in the presence of a proton gradient across the membrane. This Pseudomonas putida (strain W619) protein is ATP synthase epsilon chain.